The chain runs to 1071 residues: SLIT-ROBO Rho GTPase-activating protein 2 (1071 aa).

The region spanning 22 to 325 (KEIRAQLTEQ…AVENLDATSD (304 aa)) is the F-BAR domain. Basic and acidic residues predominate over residues 181-203 (LKEAEKQEEKQIGKSVKQEDRQT). Residues 181–211 (LKEAEKQEEKQIGKSVKQEDRQTPRSPDSTA) are disordered. Ser-206 bears the Phosphoserine mark. The stretch at 363 to 401 (QSELVQRRQQLQSRLSTLKIENEEVKKTMEATLQTIQDI) forms a coiled coil. Ser-427, Ser-500, Ser-691, Ser-695, and Ser-724 each carry phosphoserine. The Rho-GAP domain occupies 489–679 (ARRSSTVRKQ…TIIIQHENIF (191 aa)). The segment at 703–726 (THGETISAEDSTQDVTAEHHTSDD) is disordered. Residues 728 to 787 (CEPIEAIAKFDYVGRTARELSFKKGASLLLYQRASDDWWEGRHNGIDGLIPHQYIVVQDT) enclose the SH3 domain. Disordered stretches follow at residues 794 to 820 (RSSPKSEIEVMSEPPEEKVTARTGASC) and 835 to 936 (NKQR…NHRP). Ser-795 carries the post-translational modification Phosphoserine. 3 stretches are compositionally biased toward polar residues: residues 857 to 867 (LGSSLTDSSSP), 874 to 885 (RPSSQPIMSQNL), and 897 to 907 (GHGSLNSISRH). A Phosphoserine modification is found at Ser-916. The span at 919-933 (IRKTATAGRSKSFNN) shows a compositional bias: polar residues. Position 927 is a symmetric dimethylarginine; by PRMT5 (Arg-927). Position 930 is a phosphoserine (Ser-930). A coiled-coil region spans residues 940-968 (EVIAQDIEATMNSALNELQELERQSSAKH). The disordered stretch occupies residues 983 to 1012 (SPVVAPTSEPSSPLHTQLLKDPEPAFQRSA). 4 positions are modified to phosphoserine: Ser-990, Ser-994, Ser-1013, and Ser-1027. Residues 1029 to 1071 (KMAAPVKPPATRPKPTVFPKTNATSPGVNSSASPQSTDKSCTV) form a disordered region. The span at 1047-1071 (PKTNATSPGVNSSASPQSTDKSCTV) shows a compositional bias: polar residues.

As to quaternary structure, homodimer. Forms a heterooligomer with SRGAP1 and SRGAP3 through its F-BAR domain. Interacts (via SH3 domain) with GPHN. Interacts (via SH3 domain) with FMNL1 (activated by RAC1); regulates the actin filament severing activity of FMNL1 and actin dynamics. Interacts (via SH3 domain) with FMNL3. Interacts with RAC1; specifically stimulates RAC1 GTPase activity. Interacts (via F-BAR domain) with HOMER1. Interacts with ROBO1 and ROBO2. Interacts with FASLG. Interacts with PRMT5. In terms of processing, methylation at Arg-927 is required for the stimulation of cell migration, dimerization and localization at the plasma membrane protrusions.

The protein resides in the cell membrane. It localises to the cell projection. It is found in the dendritic spine. The protein localises to the postsynaptic density. Its subcellular location is the postsynaptic cell membrane. The protein resides in the lamellipodium. It localises to the cytoplasmic vesicle. It is found in the phagosome. The protein localises to the nucleus. Its subcellular location is the cytoplasm. The protein resides in the cytosol. In terms of biological role, postsynaptic RAC1 GTPase activating protein (GAP) that plays a key role in neuronal morphogenesis and migration mainly during development of the cerebral cortex. Regulates excitatory and inhibitory synapse maturation and density in cortical pyramidal neurons. SRGAP2/SRGAP2A limits excitatory and inhibitory synapse density through its RAC1-specific GTPase activating activity, while it promotes maturation of both excitatory and inhibitory synapses through its ability to bind to the postsynaptic scaffolding protein HOMER1 at excitatory synapses, and the postsynaptic protein GPHN at inhibitory synapses. Mechanistically, acts by binding and deforming membranes, thereby regulating actin dynamics to regulate cell migration and differentiation. Promotes cell repulsion and contact inhibition of locomotion: localizes to protrusions with curved edges and controls the duration of RAC1 activity in contact protrusions. In non-neuronal cells, may also play a role in cell migration by regulating the formation of lamellipodia and filopodia. The sequence is that of SLIT-ROBO Rho GTPase-activating protein 2 from Rattus norvegicus (Rat).